The chain runs to 242 residues: Mitochondrial intermembrane space import and assembly protein 40 (242 aa).

The transit peptide at 1 to 18 directs the protein to the mitochondrion; the sequence is MFARSFSNASRTIARRSL. The span at 1–22 shows a compositional bias: polar residues; the sequence is MFARSFSNASRTIARRSLSTRS. The segment at 1 to 30 is disordered; the sequence is MFARSFSNASRTIARRSLSTRSGPAPSSLW. The Mitochondrial matrix segment spans residues 19-34; that stretch reads STRSGPAPSSLWSSRN. The helical; Signal-anchor for type II membrane protein transmembrane segment at 35–51 threads the bilayer; that stretch reads AVIAGTTLAITALAVTS. The Mitochondrial intermembrane portion of the chain corresponds to 52-242; it reads ERRKVFNESA…EETAAPAAAP (191 aa). Positions 58 to 111 are disordered; the sequence is NESAQKATSPRDSIIAQDSLKENVHKKSVRQDEFSGESTKPEASTSSDSVEKAA. The span at 59–68 shows a compositional bias: polar residues; it reads ESAQKATSPR. Residues 76-90 are compositionally biased toward basic and acidic residues; that stretch reads SLKENVHKKSVRQDE. Over residues 93–105 the composition is skewed to polar residues; sequence GESTKPEASTSSD. 3 disulfides stabilise this stretch: C144–C146, C155–C188, and C165–C178. Positions 152–196 constitute a CHCH domain; the sequence is TGPCGEQFKAAFSCFVYSEAEPKGVDCVELFKVMQDCFREHPEIY. 2 consecutive short sequence motifs (cx9C motif) follow at residues 155 to 165 and 178 to 188; these read CGEQFKAAFSC and CVELFKVMQDC. The interval 215–242 is disordered; that stretch reads DEAPPQEGTMEEKVEAAKEETAAPAAAP. Positions 224–235 are enriched in basic and acidic residues; that stretch reads MEEKVEAAKEET.

As to quaternary structure, monomer. Cu(2+) serves as cofactor. Zn(2+) is required as a cofactor.

It is found in the mitochondrion inner membrane. Its function is as follows. Required for the import and folding of small cysteine-containing proteins (small Tim) in the mitochondrial intermembrane space (IMS). Forms a redox cycle with ERV1 that involves a disulfide relay system. Precursor proteins to be imported into the IMS are translocated in their reduced form into the mitochondria. The oxidized form of MIA40 forms a transient intermolecular disulfide bridge with the reduced precursor protein, resulting in oxidation of the precursor protein that now contains an intramolecular disulfide bond and is able to undergo folding in the IMS. The chain is Mitochondrial intermembrane space import and assembly protein 40 (MIA40) from Cryptococcus neoformans var. neoformans serotype D (strain B-3501A) (Filobasidiella neoformans).